We begin with the raw amino-acid sequence, 449 residues long: MREIISLNVGQAGCQIANSCWELYCLEHGIQPDGYLTEERKAADPDHGFSTFFSETGNGKYVPRTIYADLEPNVIDEVRTGAYRGLFHPEHMISGKEDASNNYARGHYTVGKELIDQVLDKVRRVADNCSGLQGFLVFHSFGGGTGSGFGALLMERLSVDYGKKSKLEFCVYPAPQTATSVVEPYNSILTTHTTLEHADCSFMVDNEAIYDICRRNLGLERPNYENLNRLIAQVVSSITASLRFDGSLNVDLNEFQTNLVPYPRIHFPLVAYAPVISAAKAAHEANSVQEMTMSCFEPNNQMVKCDPRHGKYMATCLLYRGDVVPNDAHAAVATLKTKRTIQFVDWCPTGFKLGICYQPPHQVPNGDLAKVNRAVCMLSNTTAIAEAWSALSSKFDLMYSKRAFVHWYVGEGMEEGEFSEAREDLAALERDYEEVAADSMEGEEVEAEY.

GTP is bound by residues Gln-11, Glu-71, Ser-140, Gly-144, Thr-145, Thr-179, Asn-206, and Asn-228. Glu-71 lines the Mg(2+) pocket. Glu-254 is an active-site residue.

Belongs to the tubulin family. As to quaternary structure, dimer of alpha and beta chains. A typical microtubule is a hollow water-filled tube with an outer diameter of 25 nm and an inner diameter of 15 nM. Alpha-beta heterodimers associate head-to-tail to form protofilaments running lengthwise along the microtubule wall with the beta-tubulin subunit facing the microtubule plus end conferring a structural polarity. Microtubules usually have 13 protofilaments but different protofilament numbers can be found in some organisms and specialized cells. Mg(2+) serves as cofactor.

It localises to the cytoplasm. Its subcellular location is the cytoskeleton. It catalyses the reaction GTP + H2O = GDP + phosphate + H(+). Functionally, tubulin is the major constituent of microtubules, a cylinder consisting of laterally associated linear protofilaments composed of alpha- and beta-tubulin heterodimers. Microtubules grow by the addition of GTP-tubulin dimers to the microtubule end, where a stabilizing cap forms. Below the cap, tubulin dimers are in GDP-bound state, owing to GTPase activity of alpha-tubulin. The chain is Tubulin alpha chain (TUBA) from Sordaria macrospora (strain ATCC MYA-333 / DSM 997 / K(L3346) / K-hell).